A 121-amino-acid polypeptide reads, in one-letter code: uncharacterized protein (121 aa).

Disordered stretches follow at residues 1–41 and 94–121; these read MRRQ…QESR and GGTI…GLRR. Residues 98-108 show a composition bias toward polar residues; that stretch reads SGQQSRNSSLP.

Predominantly expressed in tissues containing motile cilia. Also expressed in non-motile ciliated adult olfactory bulbs.

The protein localises to the cytoplasm. It localises to the cytoskeleton. It is found in the cilium basal body. This is an uncharacterized protein from Mus musculus (Mouse).